Here is a 1064-residue protein sequence, read N- to C-terminus: Carbamoyl phosphate synthase large chain (1064 aa).

The carboxyphosphate synthetic domain stretch occupies residues 1 to 401 (MPKRNDIKKI…SLLKAVRSLE (401 aa)). Residues Arg129, Arg169, Gly175, Gly176, Glu208, Ile210, Glu215, Gly241, Val242, His243, Gln284, and Glu298 each contribute to the ATP site. The 195-residue stretch at 133–327 (KELCERIGEP…IAKMSAKIAI (195 aa)) folds into the ATP-grasp 1 domain. The Mg(2+) site is built by Gln284, Glu298, and Asn300. Mn(2+) is bound by residues Gln284, Glu298, and Asn300. The tract at residues 402–546 (IGVFHNDLQE…YSTYEWENES (145 aa)) is oligomerization domain. Residues 547-929 (KRSSKEKIIV…ALYKSFEAAK (383 aa)) are carbamoyl phosphate synthetic domain. The 191-residue stretch at 671-861 (EKALQDLEIP…MAQLATQMIL (191 aa)) folds into the ATP-grasp 2 domain. Residues Arg707, Ser746, Leu748, Glu752, Gly777, Val778, His779, Ser780, Gln820, and Glu832 each coordinate ATP. Residues Gln820, Glu832, and Asn834 each coordinate Mg(2+). The Mn(2+) site is built by Gln820, Glu832, and Asn834. Positions 930-1064 (LHMADYGSVL…QSRSFTTKNI (135 aa)) constitute an MGS-like domain. An allosteric domain region spans residues 930 to 1064 (LHMADYGSVL…QSRSFTTKNI (135 aa)).

The protein belongs to the CarB family. As to quaternary structure, composed of two chains; the small (or glutamine) chain promotes the hydrolysis of glutamine to ammonia, which is used by the large (or ammonia) chain to synthesize carbamoyl phosphate. Tetramer of heterodimers (alpha,beta)4. Mg(2+) serves as cofactor. The cofactor is Mn(2+).

The catalysed reaction is hydrogencarbonate + L-glutamine + 2 ATP + H2O = carbamoyl phosphate + L-glutamate + 2 ADP + phosphate + 2 H(+). The enzyme catalyses hydrogencarbonate + NH4(+) + 2 ATP = carbamoyl phosphate + 2 ADP + phosphate + 2 H(+). The protein operates within amino-acid biosynthesis; L-arginine biosynthesis; carbamoyl phosphate from bicarbonate: step 1/1. It participates in pyrimidine metabolism; UMP biosynthesis via de novo pathway; (S)-dihydroorotate from bicarbonate: step 1/3. Functionally, large subunit of the glutamine-dependent carbamoyl phosphate synthetase (CPSase). CPSase catalyzes the formation of carbamoyl phosphate from the ammonia moiety of glutamine, carbonate, and phosphate donated by ATP, constituting the first step of 2 biosynthetic pathways, one leading to arginine and/or urea and the other to pyrimidine nucleotides. The large subunit (synthetase) binds the substrates ammonia (free or transferred from glutamine from the small subunit), hydrogencarbonate and ATP and carries out an ATP-coupled ligase reaction, activating hydrogencarbonate by forming carboxy phosphate which reacts with ammonia to form carbamoyl phosphate. The sequence is that of Carbamoyl phosphate synthase large chain from Lactococcus lactis subsp. lactis (strain IL1403) (Streptococcus lactis).